A 533-amino-acid chain; its full sequence is Histone-arginine methyltransferase CARMER (533 aa).

Positions 143 to 452 (ASQYFQFYGY…QSYDVTIDLH (310 aa)) constitute an SAM-dependent MTase PRMT-type domain. Residues Gln156, Arg165, Gly189, Glu211, Glu240, and Thr268 each contribute to the S-adenosyl-L-methionine site. Arg503 is subject to Asymmetric dimethylarginine; by autocatalysis.

Belongs to the class I-like SAM-binding methyltransferase superfamily. Protein arginine N-methyltransferase family. Homodimer. Post-translationally, the dimethylated protein is the major form.

It localises to the cytoplasm. Its subcellular location is the nucleus. The enzyme catalyses L-arginyl-[protein] + 2 S-adenosyl-L-methionine = N(omega),N(omega)-dimethyl-L-arginyl-[protein] + 2 S-adenosyl-L-homocysteine + 2 H(+). Methylates (mono- and asymmetric dimethylation) the guanidino nitrogens of arginyl residues in proteins. May methylate histone H3 at 'Arg-17' and activate transcription via chromatin remodeling. In Drosophila willistoni (Fruit fly), this protein is Histone-arginine methyltransferase CARMER (Art4).